The chain runs to 373 residues: Tomoregulin-1 (373 aa).

Residues 1-36 (MGAQAPLRLPAAPPLAVCGYTSVLLLFAFCLPGSGA) form the signal peptide. The Extracellular portion of the chain corresponds to 37–323 (SNQPAGGGGD…VPSRQKLTHV (287 aa)). Asn56 carries N-linked (GlcNAc...) asparagine glycosylation. The 48-residue stretch at 91 to 138 (ACQFQCHTNYIPVCGSNGDTYQNECFLRRAACKHQKDITVVARGPCYS) folds into the Kazal-like 1 domain. 3 disulfide bridges follow: Cys92-Cys122, Cys96-Cys115, and Cys104-Cys136. The N-linked (GlcNAc...) asparagine glycan is linked to Asn140. The disordered stretch occupies residues 140–162 (NGSGSGEGEEEGSGAGAHRKHSK). A Kazal-like 2 domain is found at 182 to 230 (VCNIDCSGYSFNPVCASDGSSYNNPCFVREASCIRQEQIDIRHLGHCTD). Intrachain disulfides connect Cys183–Cys214, Cys187–Cys207, Cys196–Cys228, Cys268–Cys281, Cys276–Cys292, and Cys294–Cys303. The EGF-like domain maps to 264-304 (SHMPCPENLNGYCIHGKCEFIYSTQKASCRCESGYTGQHCE). The helical transmembrane segment at 324-344 (LIAAIIGAVQIAIIVAIVMCI) threads the bilayer. The Cytoplasmic portion of the chain corresponds to 345–373 (TRKCPKNNRGRRQKQNLGHFTSETSSRMV). Residues 352 to 373 (NRGRRQKQNLGHFTSETSSRMV) are disordered. Residues 359-373 (QNLGHFTSETSSRMV) show a composition bias toward polar residues.

It belongs to the tomoregulin family. As to quaternary structure, may interact with ST14.

The protein resides in the cell membrane. Functionally, neuron-specific restriction factor that prevents herpes simplex virus 1 (HHV-1) infection in the brain by blocking viral entry. Also able to restrict herpes simplex virus 2 (HHV-2) infection, although to a lesser extent. Acts by preventing the association between the viral glycoprotein D (gD) and its cell surface receptor NECTIN1, thereby inhibiting fusion of the virus and the cell membrane. Also able to prevent the association between the viral glycoprotein B (gB) and MYH9/NMMHC-IIA and MYH10/NMMHC-IIB receptors. The sequence is that of Tomoregulin-1 (Tmeff1) from Rattus norvegicus (Rat).